Consider the following 266-residue polypeptide: Large ribosomal subunit protein uL4 (266 aa).

This sequence belongs to the universal ribosomal protein uL4 family. As to quaternary structure, part of the 50S ribosomal subunit.

Functionally, one of the primary rRNA binding proteins, this protein initially binds near the 5'-end of the 23S rRNA. It is important during the early stages of 50S assembly. It makes multiple contacts with different domains of the 23S rRNA in the assembled 50S subunit and ribosome. Its function is as follows. Forms part of the polypeptide exit tunnel. This chain is Large ribosomal subunit protein uL4, found in Sulfurisphaera tokodaii (strain DSM 16993 / JCM 10545 / NBRC 100140 / 7) (Sulfolobus tokodaii).